Reading from the N-terminus, the 134-residue chain is Large ribosomal subunit protein uL24 (134 aa).

This sequence belongs to the universal ribosomal protein uL24 family. In terms of assembly, part of the 50S ribosomal subunit.

One of two assembly initiator proteins, it binds directly to the 5'-end of the 23S rRNA, where it nucleates assembly of the 50S subunit. In terms of biological role, located at the polypeptide exit tunnel on the outside of the subunit. The sequence is that of Large ribosomal subunit protein uL24 from Sulfolobus acidocaldarius (strain ATCC 33909 / DSM 639 / JCM 8929 / NBRC 15157 / NCIMB 11770).